The following is a 198-amino-acid chain: GTP cyclohydrolase 1 (198 aa).

3 residues coordinate Zn(2+): cysteine 87, histidine 90, and cysteine 158.

It belongs to the GTP cyclohydrolase I family. In terms of assembly, homomer.

The catalysed reaction is GTP + H2O = 7,8-dihydroneopterin 3'-triphosphate + formate + H(+). It participates in cofactor biosynthesis; 7,8-dihydroneopterin triphosphate biosynthesis; 7,8-dihydroneopterin triphosphate from GTP: step 1/1. This is GTP cyclohydrolase 1 from Janthinobacterium sp. (strain Marseille) (Minibacterium massiliensis).